The sequence spans 355 residues: D-alanine--D-alanine ligase (355 aa).

Residues 143–350 (KTIFSNLKIP…IEQLVAKLVD (208 aa)) form the ATP-grasp domain. Position 178–233 (178–233 (LKKLNFPFFVKPSNSGSSLGISKVINESEILQSLEKAQKIDSRILVEEGLEVREIE)) interacts with ATP. 3 residues coordinate Mg(2+): aspartate 303, glutamate 317, and asparagine 319.

This sequence belongs to the D-alanine--D-alanine ligase family. It depends on Mg(2+) as a cofactor. Mn(2+) serves as cofactor.

Its subcellular location is the cytoplasm. The enzyme catalyses 2 D-alanine + ATP = D-alanyl-D-alanine + ADP + phosphate + H(+). It functions in the pathway cell wall biogenesis; peptidoglycan biosynthesis. Functionally, cell wall formation. In Prochlorococcus marinus (strain MIT 9215), this protein is D-alanine--D-alanine ligase.